The chain runs to 189 residues: Holliday junction branch migration complex subunit RuvA (189 aa).

Positions 1–62 (MIVALKGNIE…EEAWSLYGFA (62 aa)) are domain I. A domain II region spans residues 63 to 138 (EEAEKRVFDT…FSLSLQEGSK (76 aa)). Residues 138–139 (KA) are flexible linker. The domain III stretch occupies residues 140–189 (STPPVFEESRLALESLGFKSELIAKALQNIQATTTQEIIKEALKKLQTLR).

The protein belongs to the RuvA family. In terms of assembly, homotetramer. Forms an RuvA(8)-RuvB(12)-Holliday junction (HJ) complex. HJ DNA is sandwiched between 2 RuvA tetramers; dsDNA enters through RuvA and exits via RuvB. An RuvB hexamer assembles on each DNA strand where it exits the tetramer. Each RuvB hexamer is contacted by two RuvA subunits (via domain III) on 2 adjacent RuvB subunits; this complex drives branch migration. In the full resolvosome a probable DNA-RuvA(4)-RuvB(12)-RuvC(2) complex forms which resolves the HJ.

The protein resides in the cytoplasm. In terms of biological role, the RuvA-RuvB-RuvC complex processes Holliday junction (HJ) DNA during genetic recombination and DNA repair, while the RuvA-RuvB complex plays an important role in the rescue of blocked DNA replication forks via replication fork reversal (RFR). RuvA specifically binds to HJ cruciform DNA, conferring on it an open structure. The RuvB hexamer acts as an ATP-dependent pump, pulling dsDNA into and through the RuvAB complex. HJ branch migration allows RuvC to scan DNA until it finds its consensus sequence, where it cleaves and resolves the cruciform DNA. This Wolinella succinogenes (strain ATCC 29543 / DSM 1740 / CCUG 13145 / JCM 31913 / LMG 7466 / NCTC 11488 / FDC 602W) (Vibrio succinogenes) protein is Holliday junction branch migration complex subunit RuvA.